The sequence spans 393 residues: Dihydrolipoyllysine-residue succinyltransferase component of 2-oxoglutarate dehydrogenase complex (393 aa).

The 76-residue stretch at 3–78 folds into the Lipoyl-binding domain; the sequence is RINILVPDLP…KSNQILGNIV (76 aa). N6-lipoyllysine is present on Lys-44. Catalysis depends on residues His-364 and Asp-368.

Belongs to the 2-oxoacid dehydrogenase family. In terms of assembly, forms a 24-polypeptide structural core with octahedral symmetry. Part of the 2-oxoglutarate dehydrogenase (OGDH) complex composed of E1 (2-oxoglutarate dehydrogenase), E2 (dihydrolipoamide succinyltransferase) and E3 (dihydrolipoamide dehydrogenase); the complex contains multiple copies of the three enzymatic components (E1, E2 and E3). Requires (R)-lipoate as cofactor.

It carries out the reaction N(6)-[(R)-dihydrolipoyl]-L-lysyl-[protein] + succinyl-CoA = N(6)-[(R)-S(8)-succinyldihydrolipoyl]-L-lysyl-[protein] + CoA. It functions in the pathway amino-acid degradation; L-lysine degradation via saccharopine pathway; glutaryl-CoA from L-lysine: step 6/6. In terms of biological role, E2 component of the 2-oxoglutarate dehydrogenase (OGDH) complex which catalyzes the second step in the conversion of 2-oxoglutarate to succinyl-CoA and CO(2). This Buchnera aphidicola subsp. Schizaphis graminum (strain Sg) protein is Dihydrolipoyllysine-residue succinyltransferase component of 2-oxoglutarate dehydrogenase complex (sucB).